Consider the following 152-residue polypeptide: Cell division protein SepF (152 aa).

Positions 25–54 (EEREPVQEEKGTKDKAAFQERPQTGKQNVV) are disordered. The segment covering 28-42 (EPVQEEKGTKDKAAF) has biased composition (basic and acidic residues).

It belongs to the SepF family. As to quaternary structure, homodimer. Interacts with FtsZ.

The protein localises to the cytoplasm. Its function is as follows. Cell division protein that is part of the divisome complex and is recruited early to the Z-ring. Probably stimulates Z-ring formation, perhaps through the cross-linking of FtsZ protofilaments. Its function overlaps with FtsA. The chain is Cell division protein SepF from Bacillus pumilus (strain SAFR-032).